The chain runs to 367 residues: UDP-N-acetylglucosamine--N-acetylmuramyl-(pentapeptide) pyrophosphoryl-undecaprenol N-acetylglucosamine transferase (367 aa).

Residues 15 to 17 (TGG), N127, R163, S191, I249, and Q294 contribute to the UDP-N-acetyl-alpha-D-glucosamine site.

Belongs to the glycosyltransferase 28 family. MurG subfamily.

It localises to the cell inner membrane. It catalyses the reaction di-trans,octa-cis-undecaprenyl diphospho-N-acetyl-alpha-D-muramoyl-L-alanyl-D-glutamyl-meso-2,6-diaminopimeloyl-D-alanyl-D-alanine + UDP-N-acetyl-alpha-D-glucosamine = di-trans,octa-cis-undecaprenyl diphospho-[N-acetyl-alpha-D-glucosaminyl-(1-&gt;4)]-N-acetyl-alpha-D-muramoyl-L-alanyl-D-glutamyl-meso-2,6-diaminopimeloyl-D-alanyl-D-alanine + UDP + H(+). The protein operates within cell wall biogenesis; peptidoglycan biosynthesis. Its function is as follows. Cell wall formation. Catalyzes the transfer of a GlcNAc subunit on undecaprenyl-pyrophosphoryl-MurNAc-pentapeptide (lipid intermediate I) to form undecaprenyl-pyrophosphoryl-MurNAc-(pentapeptide)GlcNAc (lipid intermediate II). This Burkholderia cenocepacia (strain HI2424) protein is UDP-N-acetylglucosamine--N-acetylmuramyl-(pentapeptide) pyrophosphoryl-undecaprenol N-acetylglucosamine transferase.